Reading from the N-terminus, the 444-residue chain is ATP-dependent protease ATPase subunit HslU (444 aa).

ATP is bound by residues isoleucine 18, glycine 60–glutamate 65, aspartate 257, glutamate 322, and arginine 394.

Belongs to the ClpX chaperone family. HslU subfamily. In terms of assembly, a double ring-shaped homohexamer of HslV is capped on each side by a ring-shaped HslU homohexamer. The assembly of the HslU/HslV complex is dependent on binding of ATP.

It localises to the cytoplasm. In terms of biological role, ATPase subunit of a proteasome-like degradation complex; this subunit has chaperone activity. The binding of ATP and its subsequent hydrolysis by HslU are essential for unfolding of protein substrates subsequently hydrolyzed by HslV. HslU recognizes the N-terminal part of its protein substrates and unfolds these before they are guided to HslV for hydrolysis. In Psychromonas ingrahamii (strain DSM 17664 / CCUG 51855 / 37), this protein is ATP-dependent protease ATPase subunit HslU.